The sequence spans 97 residues: UPF0298 protein MGAS9429_Spy0329 (97 aa).

The protein belongs to the UPF0298 family.

The protein localises to the cytoplasm. In Streptococcus pyogenes serotype M12 (strain MGAS9429), this protein is UPF0298 protein MGAS9429_Spy0329.